Here is a 294-residue protein sequence, read N- to C-terminus: Putative S-adenosyl-L-methionine-dependent methyltransferase RHA1_ro00605 (294 aa).

Residues Asp120 and 149–150 (DL) contribute to the S-adenosyl-L-methionine site.

It belongs to the UPF0677 family.

Functionally, exhibits S-adenosyl-L-methionine-dependent methyltransferase activity. The chain is Putative S-adenosyl-L-methionine-dependent methyltransferase RHA1_ro00605 from Rhodococcus jostii (strain RHA1).